A 433-amino-acid polypeptide reads, in one-letter code: Serine hydroxymethyltransferase (433 aa).

(6S)-5,6,7,8-tetrahydrofolate is bound by residues L132 and 136 to 138; that span reads GHL. The residue at position 241 (K241) is an N6-(pyridoxal phosphate)lysine.

This sequence belongs to the SHMT family. Homodimer. The cofactor is pyridoxal 5'-phosphate.

The protein resides in the cytoplasm. It carries out the reaction (6R)-5,10-methylene-5,6,7,8-tetrahydrofolate + glycine + H2O = (6S)-5,6,7,8-tetrahydrofolate + L-serine. It participates in one-carbon metabolism; tetrahydrofolate interconversion. The protein operates within amino-acid biosynthesis; glycine biosynthesis; glycine from L-serine: step 1/1. Catalyzes the reversible interconversion of serine and glycine with tetrahydrofolate (THF) serving as the one-carbon carrier. This reaction serves as the major source of one-carbon groups required for the biosynthesis of purines, thymidylate, methionine, and other important biomolecules. Also exhibits THF-independent aldolase activity toward beta-hydroxyamino acids, producing glycine and aldehydes, via a retro-aldol mechanism. This Rhodopseudomonas palustris (strain HaA2) protein is Serine hydroxymethyltransferase.